Consider the following 48-residue polypeptide: Large ribosomal subunit protein bL36c (48 aa).

This sequence belongs to the bacterial ribosomal protein bL36 family.

The protein localises to the plastid. Its subcellular location is the chloroplast. This is Large ribosomal subunit protein bL36c from Rhodomonas salina (Cryptomonas salina).